Reading from the N-terminus, the 441-residue chain is Cortexillin-2 (441 aa).

An actin-binding region spans residues 1 to 229 (MDLNKEWEKV…VLYTSLFFHA (229 aa)). Calponin-homology (CH) domains follow at residues 9–117 (KVQE…RKYR) and 126–231 (KSSE…HAFR). 2 coiled-coil regions span residues 229-362 (AFRA…RLGL) and 406-430 (SFEE…KYLN).

The protein belongs to the cortexillin family. Homodimer; parallel.

Its subcellular location is the cytoplasm. The protein localises to the cytoskeleton. Functionally, actin-bundling protein. When linked to F-actin the actin filaments form preferentially anti-parallel bundles that associate into meshworks. Plays a major role in cytokinesis. Negatively regulates cortical localization of rapgap1. This is Cortexillin-2 (ctxB) from Dictyostelium discoideum (Social amoeba).